We begin with the raw amino-acid sequence, 570 residues long: MSEKHPGPLVVEGKLTDAERMKLESNYLRGTIAEDLNDGLTGGFKGDNFLLIRFHGMYQQDDRDIRAERAEQKLEPRHAMLLRCRLPGGVITTKQWQAIDKFAGENTIYGSIRLTNRQTFQFHGILKKNVKPVHQMLHSVGLDALATANDMNRNVLCTSNPYESQLHAEAYEWAKKISEHLLPRTRAYAEIWLDQEKVATTDEEPILGQTYLPRKFKTTVVIPPQNDIDLHANDMNFVAIAENGKLVGFNLLVGGGLSIEHGNKKTYARTASEFGYLPLEHTLAVAEAVVTTQRDWGNRTDRKNAKTKYTLERVGVETFKAEVERRAGIKFEPIRPYEFTGRGDRIGWVKGIDDNWHLTLFIENGRILDYPGRPLKTGLLEIAKIHKGDFRITANQNLIIAGVPESEKAKIEKIAKESGLMNAVTPQRENSMACVSFPTCPLAMAEAERFLPSFIDNIDNLMAKHGVSDEHIVMRVTGCPNGCGRAMLAEVGLVGKAPGRYNLHLGGNRIGTRIPRMYKENITEPEILASLDELIGRWAKEREAGEGFGDFTVRAGIIRPVLDPARDLWD.

[4Fe-4S] cluster is bound by residues Cys434, Cys440, Cys479, and Cys483. Cys483 lines the siroheme pocket.

Belongs to the nitrite and sulfite reductase 4Fe-4S domain family. Alpha(8)-beta(8). The alpha component is a flavoprotein, the beta component is a hemoprotein. The cofactor is siroheme. [4Fe-4S] cluster is required as a cofactor.

It carries out the reaction hydrogen sulfide + 3 NADP(+) + 3 H2O = sulfite + 3 NADPH + 4 H(+). Its pathway is sulfur metabolism; hydrogen sulfide biosynthesis; hydrogen sulfide from sulfite (NADPH route): step 1/1. Functionally, component of the sulfite reductase complex that catalyzes the 6-electron reduction of sulfite to sulfide. This is one of several activities required for the biosynthesis of L-cysteine from sulfate. The protein is Sulfite reductase [NADPH] hemoprotein beta-component of Escherichia coli O17:K52:H18 (strain UMN026 / ExPEC).